Consider the following 411-residue polypeptide: Tyrosine--tRNA ligase (411 aa).

Tyrosine 34 lines the L-tyrosine pocket. The 'HIGH' region signature appears at 39-48; it reads CTATSLHIGS. Residues tyrosine 171 and glutamine 175 each contribute to the L-tyrosine site. A 'KMSKS' region motif is present at residues 231–235; that stretch reads KMGKT. ATP is bound at residue lysine 234. Positions 345–411 constitute an S4 RNA-binding domain; sequence ISAYELFHEA…GKKRHILVRV (67 aa).

Belongs to the class-I aminoacyl-tRNA synthetase family. TyrS type 1 subfamily. As to quaternary structure, homodimer.

The protein localises to the cytoplasm. The enzyme catalyses tRNA(Tyr) + L-tyrosine + ATP = L-tyrosyl-tRNA(Tyr) + AMP + diphosphate + H(+). In terms of biological role, catalyzes the attachment of tyrosine to tRNA(Tyr) in a two-step reaction: tyrosine is first activated by ATP to form Tyr-AMP and then transferred to the acceptor end of tRNA(Tyr). This is Tyrosine--tRNA ligase from Rickettsia felis (strain ATCC VR-1525 / URRWXCal2) (Rickettsia azadi).